We begin with the raw amino-acid sequence, 345 residues long: D-apiose dehydrogenase (345 aa).

Residue phenylalanine 15–phenylalanine 16 coordinates NAD(+). Mg(2+)-binding residues include tryptophan 24, lysine 25, valine 27, and alanine 30. NAD(+) is bound by residues aspartate 37, serine 79, glutamine 97–lysine 98, asparagine 126, and glutamine 165–tyrosine 167. Lysine 98 is a binding site for substrate. The substrate site is built by glutamine 165, aspartate 178, histidine 182, and tyrosine 232.

Belongs to the Gfo/Idh/MocA family.

It carries out the reaction D-apiofuranose + NAD(+) = D-apionolactone + NADH + H(+). It participates in carbohydrate metabolism. Functionally, involved in catabolism of D-apiose. Catalyzes oxidation of D-apiose to D-apionolactone. This chain is D-apiose dehydrogenase, found in Rhizobium rhizogenes (strain K84 / ATCC BAA-868) (Agrobacterium radiobacter).